A 271-amino-acid chain; its full sequence is Ribosomal RNA small subunit methyltransferase A (271 aa).

Positions 11, 13, 38, 59, 84, and 109 each coordinate S-adenosyl-L-methionine.

It belongs to the class I-like SAM-binding methyltransferase superfamily. rRNA adenine N(6)-methyltransferase family. RsmA subfamily.

The protein resides in the cytoplasm. It carries out the reaction adenosine(1518)/adenosine(1519) in 16S rRNA + 4 S-adenosyl-L-methionine = N(6)-dimethyladenosine(1518)/N(6)-dimethyladenosine(1519) in 16S rRNA + 4 S-adenosyl-L-homocysteine + 4 H(+). Specifically dimethylates two adjacent adenosines (A1518 and A1519) in the loop of a conserved hairpin near the 3'-end of 16S rRNA in the 30S particle. May play a critical role in biogenesis of 30S subunits. This chain is Ribosomal RNA small subunit methyltransferase A, found in Trichormus variabilis (strain ATCC 29413 / PCC 7937) (Anabaena variabilis).